The primary structure comprises 212 residues: Probable 2-dehydro-3-deoxy-6-phosphogalactonate aldolase (212 aa).

R18 is a 2-dehydro-3-deoxy-6-phospho-D-galactonate binding site. E41 serves as the catalytic Proton donor/acceptor. 2-dehydro-3-deoxy-6-phospho-D-galactonate-binding residues include T70, K130, G160, G180, and S181. K130 acts as the Schiff-base intermediate with substrate in catalysis.

Belongs to the KHG/KDPG aldolase family. As to quaternary structure, homotrimer.

The enzyme catalyses 2-dehydro-3-deoxy-6-phospho-D-galactonate = D-glyceraldehyde 3-phosphate + pyruvate. It participates in carbohydrate acid metabolism; D-galactonate degradation; D-glyceraldehyde 3-phosphate and pyruvate from D-galactonate: step 3/3. Functionally, involved in the degradation of galactose via the DeLey-Doudoroff pathway. Catalyzes the reversible, stereospecific retro-aldol cleavage of 2-keto-3-deoxy-6-phosphogalactonate (KDPGal) to pyruvate and D-glyceraldehyde-3-phosphate. This chain is Probable 2-dehydro-3-deoxy-6-phosphogalactonate aldolase (dgoA), found in Rhizobium meliloti (strain 1021) (Ensifer meliloti).